Consider the following 565-residue polypeptide: Periplasmic trehalase (565 aa).

A signal peptide spans 1-30; sequence MKSPAPSRPQKMALIPACIFLYFAALSVQA. Substrate-binding positions include arginine 152, 159–160, asparagine 196, 205–207, 277–279, and glycine 310; these read WD, RSQ, and RPE. Catalysis depends on proton donor/acceptor residues aspartate 312 and glutamate 496. Glutamate 511 contributes to the substrate binding site. The interval 540 to 565 is disordered; sequence DNVPATHPTVKSATTQPSTKEAQPTP. The segment covering 548-565 has biased composition (polar residues); the sequence is TVKSATTQPSTKEAQPTP.

It belongs to the glycosyl hydrolase 37 family. Monomer.

It is found in the periplasm. It carries out the reaction alpha,alpha-trehalose + H2O = alpha-D-glucose + beta-D-glucose. Functionally, provides the cells with the ability to utilize trehalose at high osmolarity by splitting it into glucose molecules that can subsequently be taken up by the phosphotransferase-mediated uptake system. The sequence is that of Periplasmic trehalase from Shigella flexneri serotype 5b (strain 8401).